We begin with the raw amino-acid sequence, 273 residues long: Large ribosomal subunit protein uL2 (273 aa).

The segment at 228 to 273 (VDHPHGGGEGKTSGGRHPVTPWGFPTKGKKTRKNKRTSKFIVKKRK) is disordered. Residues 254 to 273 (KGKKTRKNKRTSKFIVKKRK) show a composition bias toward basic residues.

This sequence belongs to the universal ribosomal protein uL2 family. Part of the 50S ribosomal subunit. Forms a bridge to the 30S subunit in the 70S ribosome.

One of the primary rRNA binding proteins. Required for association of the 30S and 50S subunits to form the 70S ribosome, for tRNA binding and peptide bond formation. It has been suggested to have peptidyltransferase activity; this is somewhat controversial. Makes several contacts with the 16S rRNA in the 70S ribosome. The protein is Large ribosomal subunit protein uL2 of Rickettsia felis (strain ATCC VR-1525 / URRWXCal2) (Rickettsia azadi).